The primary structure comprises 372 residues: MLVAVVKELKQGEGRVACTPENVRKLTDAGHKVIVEKNAGIGSGFSNDMYEKEGAKIVTHEQAWEADLVIKVKEPHESEYQYFKKNQIIWGFLHLASSKEIVEKMQEVGVTAISGETIIKNGKAELLAPMSAIAGQRSAIMGAYYSEAQHGGQGTLVTGVHENVDIPGSTYVIFGGGVAATNAANVALGLNAKVIIIELNDDRIKYLEDMYAEKDVTVVKSTPENLAEQIKKADVFISTILISGAKPPKLVTREMVKSMKKGSVLIDIAIDQGGTIETIRPTTISDPVYEEEGVIHYGVPNQPGAVPRTSTMALAQGNIDYILEICDKGLEQAIKDNEALSTGVNIYQGQVTNQGLASSHDLDYKEILNVIE.

Residue histidine 94 is part of the active site. 170–200 (TYVIFGGGVAATNAANVALGLNAKVIIIELN) lines the NAD(+) pocket.

Belongs to the AlaDH/PNT family.

The enzyme catalyses L-alanine + NAD(+) + H2O = pyruvate + NH4(+) + NADH + H(+). The protein operates within amino-acid degradation; L-alanine degradation via dehydrogenase pathway; NH(3) and pyruvate from L-alanine: step 1/1. In terms of biological role, may play a role in cell wall synthesis as L-alanine is an important constituent of the peptidoglycan layer. In Staphylococcus aureus (strain NCTC 8325 / PS 47), this protein is Alanine dehydrogenase 1 (ald1).